Here is a 790-residue protein sequence, read N- to C-terminus: Disintegrin and metalloproteinase domain-containing protein 30 (790 aa).

The N-terminal stretch at 1-27 (MRSVQIFLSQCRLLLLLVPTMLLKSLG) is a signal peptide. A propeptide spanning residues 28 to 198 (EDVIFHPEGE…KARLRDFPGS (171 aa)) is cleaved from the precursor. The short motif at 170-177 (QVCGLSDD) is the Cysteine switch element. Residue Cys-172 participates in Zn(2+) binding. Residues 199 to 687 (YKHPKYLELI…LRGAIPSSIW (489 aa)) lie on the Extracellular side of the membrane. A Peptidase M12B domain is found at 203-393 (KYLELILLFD…SGATCLNNIP (191 aa)). Asn-222 carries N-linked (GlcNAc...) asparagine glycosylation. Intrachain disulfides connect Cys-313-Cys-388, Cys-353-Cys-373, and Cys-355-Cys-361. His-338 is a binding site for Zn(2+). Glu-339 is an active-site residue. The Zn(2+) site is built by His-342 and His-348. Asn-372, Asn-438, Asn-473, and Asn-625 each carry an N-linked (GlcNAc...) asparagine glycan. The region spanning 399 to 485 (LKRCGNKIVE…SCPNDVYKQD (87 aa)) is the Disintegrin domain. A disulfide bridge connects residues Cys-457 and Cys-477. Positions 629 to 663 (LQFDCLPEKCNTRGVCNNRKNCHCMYGWAPPFCEE) constitute an EGF-like domain. 3 cysteine pairs are disulfide-bonded: Cys-633–Cys-644, Cys-638–Cys-650, and Cys-652–Cys-661. The helical transmembrane segment at 688 to 708 (VVSIIMFRLILLILSVVFVFF) threads the bilayer. The Cytoplasmic portion of the chain corresponds to 709–790 (RQVIGNHLKP…KAKSVKKQKK (82 aa)). Residues 720 to 779 (QEKMPLSKAKTEQEESKTKTVQEESKTKTGQEESEAKTGQEESKAKTGQEESKANIESKR) show a composition bias toward basic and acidic residues. The tract at residues 720-790 (QEKMPLSKAK…KAKSVKKQKK (71 aa)) is disordered. 5 tandem repeats follow at residues 732–740 (QEESKTKTV), 741–749 (QEESKTKTG), 750–758 (QEESEAKTG), 759–767 (QEESKAKTG), and 768–776 (QEESKANIE). The tract at residues 732-776 (QEESKTKTVQEESKTKTGQEESEAKTGQEESKAKTGQEESKANIE) is 5 X 9 AA approximate repeats. A compositionally biased stretch (basic residues) spans 780–790 (PKAKSVKKQKK).

As to quaternary structure, interacts with CTSD; this leads to activation of CTSD. It depends on Zn(2+) as a cofactor. Expressed in brain neurons (at protein level). Expressed in testis.

The protein localises to the late endosome membrane. Plays a role in lysosomal amyloid precursor protein (APP) processing by cleaving and activating CTSD/cathepsin D which leads to APP degradation. In Homo sapiens (Human), this protein is Disintegrin and metalloproteinase domain-containing protein 30 (ADAM30).